A 235-amino-acid chain; its full sequence is Orotidine 5'-phosphate decarboxylase (235 aa).

Substrate is bound by residues aspartate 17, lysine 39, 66–75 (DLKLHDIGNT), threonine 121, arginine 182, glutamine 191, glycine 211, and arginine 212. Lysine 68 (proton donor) is an active-site residue.

The protein belongs to the OMP decarboxylase family. Type 1 subfamily. As to quaternary structure, homodimer.

It catalyses the reaction orotidine 5'-phosphate + H(+) = UMP + CO2. Its pathway is pyrimidine metabolism; UMP biosynthesis via de novo pathway; UMP from orotate: step 2/2. Functionally, catalyzes the decarboxylation of orotidine 5'-monophosphate (OMP) to uridine 5'-monophosphate (UMP). The chain is Orotidine 5'-phosphate decarboxylase from Rhodopseudomonas palustris (strain BisB5).